The chain runs to 677 residues: AP-2 complex subunit beta (677 aa).

A disordered region spans residues 597–677 (RLRTRDSNPS…PMTPETHLMD (81 aa)). A compositionally biased stretch (basic residues) spans 616 to 627 (KKYNHFHQKSQT). The span at 636–654 (RNSWNPSPFSDESNSNTFS) shows a compositional bias: polar residues.

It belongs to the adaptor complexes large subunit family. In terms of assembly, adaptor protein complex 2 (AP-2) is a heterotetramer composed of two large adaptins (alpha-type subunit apl3 and beta-type subunit apl1), a medium chain (mu-type subunit apm4) and a small adaptin (sigma-type subunit aps2).

The protein resides in the cell membrane. The protein localises to the membrane. Its subcellular location is the coated pit. Functionally, adaptins are components of the adaptor complexes which link clathrin to receptors in coated vesicles. Clathrin-associated protein complexes are believed to interact with the cytoplasmic tails of membrane proteins, leading to their selection and concentration. Beta adaptin is a subunit of the plasma membrane adaptor. This is AP-2 complex subunit beta (apl1) from Schizosaccharomyces pombe (strain 972 / ATCC 24843) (Fission yeast).